We begin with the raw amino-acid sequence, 450 residues long: MKHLASSIALTLLLPAVQAQQTVWGQCGGQGWSGPTNCVAGAACSTLNPYYAQCIPGATATSTTLSTTTTTQTTTKPTTTGPTTSAPTVTASGNPFSGYQLYANPYYSSEVHTLAMPSLPSSLQPKASAVAEVPSFVWLDVAAKVPTMGTYLADIQAKNKAGASPPIAGIFVVYDLPDRDCAALASNGEYSIANNGVANYKAYIDAIRAQLVKYSDVHTILVIEPDSLANLVTNLNVAKCANAQSAYLECVDYALKQLNLPNVAMYLDAGHAGWLGWPANLGPAATLFAKVYTDAGSPAALRGLATNVANYNAWSLSTCPSYTQGDPNCDEKKYINAMAPLLKNAGFDAHFIMDTSRNGVQPTKQSAWGDWCNVIGTGFGVRPSTNTGDPLQDAFVWIKPGGESDGTSNSSSARYDAHCGYSDALQPAPEAGTWFQAYFEQLLTNANPSF.

The signal sequence occupies residues 1 to 19 (MKHLASSIALTLLLPAVQA). The CBM1 domain maps to 20–55 (QQTVWGQCGGQGWSGPTNCVAGAACSTLNPYYAQCI). Cystine bridges form between Cys-27/Cys-44 and Cys-38/Cys-54. The interval 59–90 (TATSTTLSTTTTTQTTTKPTTTGPTTSAPTVT) is thr-rich linker. The disordered stretch occupies residues 63 to 89 (TTLSTTTTTQTTTKPTTTGPTTSAPTV). Residues 91-450 (ASGNPFSGYQ…QLLTNANPSF (360 aa)) form a catalytic region. Residue Asp-180 is part of the active site. Intrachain disulfides connect Cys-181–Cys-240 and Cys-372–Cys-419. Asp-226 functions as the Proton donor in the catalytic mechanism. The active-site Nucleophile is the Asp-405. Residue Asn-409 is glycosylated (N-linked (GlcNAc...) asparagine).

It belongs to the glycosyl hydrolase 6 (cellulase B) family.

The protein localises to the secreted. The enzyme catalyses Hydrolysis of (1-&gt;4)-beta-D-glucosidic linkages in cellulose and cellotetraose, releasing cellobiose from the non-reducing ends of the chains.. Its function is as follows. The biological conversion of cellulose to glucose generally requires three types of hydrolytic enzymes: (1) Endoglucanases which cut internal beta-1,4-glucosidic bonds; (2) Exocellobiohydrolases that cut the disaccharide cellobiose from the non-reducing end of the cellulose polymer chain; (3) Beta-1,4-glucosidases which hydrolyze the cellobiose and other short cello-oligosaccharides to glucose. This chain is Probable 1,4-beta-D-glucan cellobiohydrolase C (cbhC), found in Neosartorya fischeri (strain ATCC 1020 / DSM 3700 / CBS 544.65 / FGSC A1164 / JCM 1740 / NRRL 181 / WB 181) (Aspergillus fischerianus).